The primary structure comprises 61 residues: Bacteriocin sakacin-P (61 aa).

Residues Met-1 to Gly-18 constitute a propeptide that is removed on maturation. Cysteines 27 and 32 form a disulfide.

It belongs to the bacteriocin class IIA/YGNGV family.

The protein resides in the secreted. Bactericidal activity; inhibits closely related Lactobacilli, Listeria monocytogenes and ivanovvi, Enterococcus faecalis, Carnobacterium sp and Brocothrix thermosphacta. The protein is Bacteriocin sakacin-P (sakP) of Latilactobacillus sakei (Lactobacillus sakei).